Here is a 309-residue protein sequence, read N- to C-terminus: Small ribosomal subunit biogenesis GTPase RsgA (309 aa).

One can recognise a CP-type G domain in the interval 64-225; it reads ENELVRPPLA…VADTPGFSTY (162 aa). GTP contacts are provided by residues 113–116 and 168–176; these read SKTD and GQTGAGKST. Zn(2+) contacts are provided by Cys-249, Cys-254, His-256, and Cys-262.

It belongs to the TRAFAC class YlqF/YawG GTPase family. RsgA subfamily. In terms of assembly, monomer. Associates with 30S ribosomal subunit, binds 16S rRNA. Requires Zn(2+) as cofactor.

The protein localises to the cytoplasm. One of several proteins that assist in the late maturation steps of the functional core of the 30S ribosomal subunit. Helps release RbfA from mature subunits. May play a role in the assembly of ribosomal proteins into the subunit. Circularly permuted GTPase that catalyzes slow GTP hydrolysis, GTPase activity is stimulated by the 30S ribosomal subunit. The sequence is that of Small ribosomal subunit biogenesis GTPase RsgA from Pediococcus pentosaceus (strain ATCC 25745 / CCUG 21536 / LMG 10740 / 183-1w).